The following is a 131-amino-acid chain: D-ribose pyranase (131 aa).

His20 (proton donor) is an active-site residue. Residues Asp28, His98, and 120 to 122 (YSN) contribute to the substrate site.

The protein belongs to the RbsD / FucU family. RbsD subfamily. Homodecamer.

It is found in the cytoplasm. The enzyme catalyses beta-D-ribopyranose = beta-D-ribofuranose. It functions in the pathway carbohydrate metabolism; D-ribose degradation; D-ribose 5-phosphate from beta-D-ribopyranose: step 1/2. In terms of biological role, catalyzes the interconversion of beta-pyran and beta-furan forms of D-ribose. The polypeptide is D-ribose pyranase (Lactobacillus gasseri (strain ATCC 33323 / DSM 20243 / BCRC 14619 / CIP 102991 / JCM 1131 / KCTC 3163 / NCIMB 11718 / NCTC 13722 / AM63)).